The sequence spans 1011 residues: Histone deacetylase 9 (1011 aa).

Phosphoserine is present on Ser22. The tract at residues 23–27 (PLDLR) is interaction with CTBP1. Disordered regions lie at residues 110–139 (RQEQ…RAVA), 183–249 (TSLD…KDGN), and 262–304 (TESS…EQMV). Residues 136-154 (RAVASTEVKQKLQEFLLSK) form an interaction with MEF2 region. The tract at residues 175–343 (LWYTAAHHTS…LPAVPSQLNA (169 aa)) is interaction with MAPK10. Residues 185–199 (LDQSSPPLSGTSPSY) show a composition bias toward polar residues. The span at 208–219 (DAKDDFPLRKTA) shows a compositional bias: basic and acidic residues. Positions 218 to 261 (TASEPNLKVRSRLKQKVAERRSSPLLRRKDGNVVTSFKKRMFEV) are interaction with ETV6. Phosphoserine occurs at positions 220 and 240. The span at 233–248 (KVAERRSSPLLRRKDG) shows a compositional bias: basic and acidic residues. Residues 262-285 (TESSVSSSSPGSGPSSPNNGPTGS) are compositionally biased toward low complexity. Ser451 carries the post-translational modification Phosphoserine. The disordered stretch occupies residues 494 to 536 (QLKQPGSHLEEAEEELQGDQAMQEDRAPSSGNSTRSDSSACVD). Over residues 522–532 (SSGNSTRSDSS) the composition is skewed to polar residues. At Ser554 the chain carries Phosphoserine. Residues 631-978 (SATGIAYDPL…VNALLGNELE (348 aa)) form a histone deacetylase region. The Zn(2+) site is built by Cys646, Cys648, His654, and Cys731. His783 is a catalytic residue.

The protein belongs to the histone deacetylase family. HD type 2 subfamily. In terms of assembly, homodimer. Interacts with CTBP1. The phosphorylated form interacts with 14-3-3. Interacts with HDAC1 and HDAC3, and probably with HDAC4 and HDAC5. Interacts with MEF2, MAPK10, ETV6, NCOR1 and BCL6. Interacts with FOXP3 in the absence of T-cell stimulation. Post-translationally, phosphorylated on Ser-220 and Ser-450; which promotes 14-3-3-binding, impairs interaction with MEF2, and antagonizes antimyogenic activity. Phosphorylated on Ser-240; which impairs nuclear accumulation. Isoform 7 is phosphorylated on Tyr-1010. Phosphorylated by the PKC kinases PKN1 and PKN2, impairing nuclear import. Sumoylated. Broadly expressed, with highest levels in brain, heart, muscle and testis. Isoform 3 is present in human bladder carcinoma cells (at protein level).

The protein localises to the nucleus. The enzyme catalyses N(6)-acetyl-L-lysyl-[histone] + H2O = L-lysyl-[histone] + acetate. Its activity is regulated as follows. Inhibited by Trichostatin A (TSA) and suberoylanilide hydroxamic acid. In terms of biological role, responsible for the deacetylation of lysine residues on the N-terminal part of the core histones (H2A, H2B, H3 and H4). Histone deacetylation gives a tag for epigenetic repression and plays an important role in transcriptional regulation, cell cycle progression and developmental events. Represses MEF2-dependent transcription. Its function is as follows. Isoform 3 lacks active site residues and therefore is catalytically inactive. Represses MEF2-dependent transcription by recruiting HDAC1 and/or HDAC3. Seems to inhibit skeletal myogenesis and to be involved in heart development. Protects neurons from apoptosis, both by inhibiting JUN phosphorylation by MAPK10 and by repressing JUN transcription via HDAC1 recruitment to JUN promoter. In Homo sapiens (Human), this protein is Histone deacetylase 9 (HDAC9).